We begin with the raw amino-acid sequence, 243 residues long: Ubiquinone/menaquinone biosynthesis C-methyltransferase UbiE (243 aa).

S-adenosyl-L-methionine is bound by residues T69, D90, and D116–A117.

It belongs to the class I-like SAM-binding methyltransferase superfamily. MenG/UbiE family.

The enzyme catalyses a 2-demethylmenaquinol + S-adenosyl-L-methionine = a menaquinol + S-adenosyl-L-homocysteine + H(+). It carries out the reaction a 2-methoxy-6-(all-trans-polyprenyl)benzene-1,4-diol + S-adenosyl-L-methionine = a 5-methoxy-2-methyl-3-(all-trans-polyprenyl)benzene-1,4-diol + S-adenosyl-L-homocysteine + H(+). The protein operates within quinol/quinone metabolism; menaquinone biosynthesis; menaquinol from 1,4-dihydroxy-2-naphthoate: step 2/2. It participates in cofactor biosynthesis; ubiquinone biosynthesis. Its function is as follows. Methyltransferase required for the conversion of demethylmenaquinol (DMKH2) to menaquinol (MKH2) and the conversion of 2-polyprenyl-6-methoxy-1,4-benzoquinol (DDMQH2) to 2-polyprenyl-3-methyl-6-methoxy-1,4-benzoquinol (DMQH2). This chain is Ubiquinone/menaquinone biosynthesis C-methyltransferase UbiE, found in Paraburkholderia phymatum (strain DSM 17167 / CIP 108236 / LMG 21445 / STM815) (Burkholderia phymatum).